The chain runs to 337 residues: Ribosomal RNA small subunit methyltransferase H (337 aa).

Residues 45–47 (GGH), Asp-64, Phe-91, Asp-120, and Gln-127 contribute to the S-adenosyl-L-methionine site.

Belongs to the methyltransferase superfamily. RsmH family.

It localises to the cytoplasm. The enzyme catalyses cytidine(1402) in 16S rRNA + S-adenosyl-L-methionine = N(4)-methylcytidine(1402) in 16S rRNA + S-adenosyl-L-homocysteine + H(+). In terms of biological role, specifically methylates the N4 position of cytidine in position 1402 (C1402) of 16S rRNA. The polypeptide is Ribosomal RNA small subunit methyltransferase H (Corynebacterium glutamicum (strain ATCC 13032 / DSM 20300 / JCM 1318 / BCRC 11384 / CCUG 27702 / LMG 3730 / NBRC 12168 / NCIMB 10025 / NRRL B-2784 / 534)).